The primary structure comprises 156 residues: MPRRREVPKRKVLADPKYGSELLTKFVNMVMRDGKRSVAEKIMYGALERIESKGHETPMEVLETALENVQPKVEVKSRRVGGATYQVPVEVRPERRTTLAMRWLLDAARKRGETTMALRLAGEMLDASESRGAAVKKREDTHRMAEANKAFSHYRW.

Belongs to the universal ribosomal protein uS7 family. In terms of assembly, part of the 30S ribosomal subunit. Contacts proteins S9 and S11.

In terms of biological role, one of the primary rRNA binding proteins, it binds directly to 16S rRNA where it nucleates assembly of the head domain of the 30S subunit. Is located at the subunit interface close to the decoding center, probably blocks exit of the E-site tRNA. In Alkalilimnicola ehrlichii (strain ATCC BAA-1101 / DSM 17681 / MLHE-1), this protein is Small ribosomal subunit protein uS7.